The chain runs to 427 residues: Proteinase-activated receptor 1 (427 aa).

Residues 1–21 form the signal peptide; sequence MGPRWLLLWAAGLGLCSPLVS. The propeptide at 22 to 41 is removed for receptor activation; that stretch reads ARTRGPRPGTDPTNGTLGPR. The interval 23–87 is disordered; it reads RTRGPRPGTD…RSSPPQKSPP (65 aa). N-linked (GlcNAc...) asparagine glycosylation occurs at N35. Topologically, residues 42–104 are extracellular; sequence SFFLRNSNDG…SGYLTSAWLT (63 aa). Residues 58-68 show a composition bias toward acidic residues; the sequence is PEDEDSSEGEF. N77 carries an N-linked (GlcNAc...) asparagine glycan. A helical transmembrane segment spans residues 105–130; it reads VFIPSVYTGVFLVSLPLNIMAVVVFV. Residues 131–139 lie on the Cytoplasmic side of the membrane; the sequence is LKMKVKKPA. The chain crosses the membrane as a helical span at residues 140–159; it reads VVYMLHLAAADVLFVCVLPF. Topologically, residues 160-178 are extracellular; sequence KISYYFSGSDWRFGSAMCR. C177 and C256 form a disulfide bridge. A helical membrane pass occupies residues 179 to 200; the sequence is FVTAAFYGNMYASIMLMTAISV. Residues 201–220 lie on the Cytoplasmic side of the membrane; that stretch reads DRFLAVVYPIQSLSWRTLGR. A helical transmembrane segment spans residues 221 to 241; that stretch reads ASFICLAIWAMAIAGVAPLLL. At 242–270 the chain is on the extracellular side; sequence QEQATQVPGLNITACHDVLNQTLLEGYYS. N252 and N261 each carry an N-linked (GlcNAc...) asparagine glycan. A helical membrane pass occupies residues 271-290; that stretch reads YYFSAFSAVFFFVPLTLSTV. At 291-313 the chain is on the cytoplasmic side; that stretch reads SYVSIIRCLSSSTVANQNKKSRA. A helical transmembrane segment spans residues 314–336; sequence LLLSAAVFCIFILCFGPTNILLL. The Extracellular portion of the chain corresponds to 337-351; that stretch reads LHYAFLSSDPMTEAA. Residues 352–376 form a helical membrane-spanning segment; that stretch reads YFAYLLCVCVSSISCCIDPLIYYYA. Over 377-427 the chain is Cytoplasmic; sequence SSECQRHLFAILHCKESSDPGSCNSSGQLMPSKMDTCSSNLSSSLYKKLLT. S420 is modified (phosphoserine).

Belongs to the G-protein coupled receptor 1 family. Proteolytic cleavage by thrombin generates a new N-terminus that functions as a tethered ligand. Also proteolytically cleaved by cathepsin CTSG. In terms of processing, phosphorylated in the C-terminal tail; probably mediating desensitization prior to the uncoupling and internalization of the receptor.

Its subcellular location is the cell membrane. In terms of biological role, high affinity receptor that binds the activated thrombin, leading to calcium release from intracellular stores. The thrombin-activated receptor signaling pathway is mediated through PTX-insensitive G proteins, activation of phospholipase C resulting in the production of 1D-myo-inositol 1,4,5-trisphosphate (InsP3) which binds to InsP3 receptors causing calcium release from the stores. In astrocytes, the calcium released into the cytosol allows the Ca(2+)-dependent release of L-glutamate into the synaptic cleft through BEST1, that targets the neuronal postsynaptic GRIN2A/NMDAR receptor resulting in the synaptic plasticity regulation. May play a role in platelets activation and in vascular development. Mediates up-regulation of pro-inflammatory cytokines, such as MCP-1/CCL2 and IL6, triggered by coagulation factor Xa (F10) in cardiac fibroblasts and umbilical vein endothelial cells. The protein is Proteinase-activated receptor 1 of Bos taurus (Bovine).